The following is a 282-amino-acid chain: MAVRKLKPTSAGRRFQTVSDFEEITRTRPEKSLTVGLTKKSGRNNLGRITSRRRGGGVKRLYRIIDFKRDKTGIEARVAHIEYDPNRTARIALLHYTDGEKRYILAPVGLKQGDVVMSGVNDRNGEVADIMPGNALPMQRIPVGTVIHNIELYPGKGGQLCRAAGTYAQLVAKEGKYALLRLPSGEVRKVLVTCVATVGQVGNVHHESIRLGKAGRNRWLGRRPKVRGVAMNPIDHPLGGGEGRSSGGRHPVSPWGMPAKGYKTRDKKKASSRLIVKRRGQK.

The interval 230–282 (AMNPIDHPLGGGEGRSSGGRHPVSPWGMPAKGYKTRDKKKASSRLIVKRRGQK) is disordered. Positions 265–282 (RDKKKASSRLIVKRRGQK) are enriched in basic residues.

It belongs to the universal ribosomal protein uL2 family. Part of the 50S ribosomal subunit. Forms a bridge to the 30S subunit in the 70S ribosome.

In terms of biological role, one of the primary rRNA binding proteins. Required for association of the 30S and 50S subunits to form the 70S ribosome, for tRNA binding and peptide bond formation. It has been suggested to have peptidyltransferase activity; this is somewhat controversial. Makes several contacts with the 16S rRNA in the 70S ribosome. The protein is Large ribosomal subunit protein uL2 of Desulfovibrio desulfuricans (strain ATCC 27774 / DSM 6949 / MB).